Here is a 101-residue protein sequence, read N- to C-terminus: Small ribosomal subunit protein uS14 (101 aa).

The protein belongs to the universal ribosomal protein uS14 family. As to quaternary structure, part of the 30S ribosomal subunit. Contacts proteins S3 and S10.

Functionally, binds 16S rRNA, required for the assembly of 30S particles and may also be responsible for determining the conformation of the 16S rRNA at the A site. This is Small ribosomal subunit protein uS14 from Francisella tularensis subsp. tularensis (strain FSC 198).